The following is a 62-amino-acid chain: Conotoxin Pl168 (62 aa).

The N-terminal stretch at 1–21 (MGMRMMFTVFLLVVLATTVVS) is a signal peptide. A propeptide spanning residues 22 to 40 (FTLDRASDGANAAADLVAR) is cleaved from the precursor. 2 cysteine pairs are disulfide-bonded: cysteine 46–cysteine 52 and cysteine 47–cysteine 61.

The protein belongs to the conotoxin A superfamily. Both Pro-53 and Pro-62 are not in cis/trans isomerization. As to expression, expressed by the venom duct.

The protein localises to the secreted. In terms of biological role, probable neurotoxin with unknown target. Possibly targets ion channels. In Conus planorbis (Planorbis cone), this protein is Conotoxin Pl168.